A 624-amino-acid polypeptide reads, in one-letter code: UvrABC system protein C (624 aa).

In terms of domain architecture, GIY-YIG spans 25-104 (AEPGVYFMRD…IKQHQPHFNV (80 aa)). Residues 214 to 249 (SELIDTLTPQMEAAAENLNFEQAARIRDQINGLKTL) enclose the UVR domain.

It belongs to the UvrC family. In terms of assembly, interacts with UvrB in an incision complex.

The protein resides in the cytoplasm. Functionally, the UvrABC repair system catalyzes the recognition and processing of DNA lesions. UvrC both incises the 5' and 3' sides of the lesion. The N-terminal half is responsible for the 3' incision and the C-terminal half is responsible for the 5' incision. In Cyanothece sp. (strain PCC 7425 / ATCC 29141), this protein is UvrABC system protein C.